The primary structure comprises 487 residues: Glutamate--tRNA ligase (487 aa).

The 'HIGH' region signature appears at 11–21 (PSPTGYPHLGN). Residues Cys108, Cys110, Cys135, and Asp137 each coordinate Zn(2+). Positions 245–249 (KLSKR) match the 'KMSKS' region motif. Residue Lys248 coordinates ATP.

This sequence belongs to the class-I aminoacyl-tRNA synthetase family. Glutamate--tRNA ligase type 1 subfamily. As to quaternary structure, monomer. Zn(2+) serves as cofactor.

It is found in the cytoplasm. The catalysed reaction is tRNA(Glu) + L-glutamate + ATP = L-glutamyl-tRNA(Glu) + AMP + diphosphate. In terms of biological role, catalyzes the attachment of glutamate to tRNA(Glu) in a two-step reaction: glutamate is first activated by ATP to form Glu-AMP and then transferred to the acceptor end of tRNA(Glu). This chain is Glutamate--tRNA ligase, found in Dehalococcoides mccartyi (strain ATCC BAA-2100 / JCM 16839 / KCTC 5957 / BAV1).